Consider the following 731-residue polypeptide: 1,4-alpha-glucan branching enzyme GlgB (731 aa).

Asp-408 functions as the Nucleophile in the catalytic mechanism. The Proton donor role is filled by Glu-461.

This sequence belongs to the glycosyl hydrolase 13 family. GlgB subfamily. Monomer.

The catalysed reaction is Transfers a segment of a (1-&gt;4)-alpha-D-glucan chain to a primary hydroxy group in a similar glucan chain.. It participates in glycan biosynthesis; glycogen biosynthesis. Its function is as follows. Catalyzes the formation of the alpha-1,6-glucosidic linkages in glycogen by scission of a 1,4-alpha-linked oligosaccharide from growing alpha-1,4-glucan chains and the subsequent attachment of the oligosaccharide to the alpha-1,6 position. This Corynebacterium glutamicum (strain ATCC 13032 / DSM 20300 / JCM 1318 / BCRC 11384 / CCUG 27702 / LMG 3730 / NBRC 12168 / NCIMB 10025 / NRRL B-2784 / 534) protein is 1,4-alpha-glucan branching enzyme GlgB.